A 1290-amino-acid polypeptide reads, in one-letter code: 1-phosphatidylinositol 4,5-bisphosphate phosphodiesterase gamma-1 (1290 aa).

Ala2 is subject to N-acetylalanine. A PH 1 domain is found at 27 to 142 (RSLEVGTVMT…WIKGLTWLME (116 aa)). Positions 152 to 187 (QIERWLRKQFYSVDRNREDRISAKDLKNMLSQVNYR) constitute an EF-hand domain. The Ca(2+) site is built by Asp165, Asn167, Glu169, Arg171, and Asp176. A PI-PLC X-box domain is found at 320-464 (DTMNNPLSHY…LKRKILIKHK (145 aa)). Residues His335 and His380 contribute to the active site. The region spanning 489 to 523 (SIKNGILYLEDPVNHEWYPHYFVLTSSKIYYSEET) is the PH 2; first part domain. Residue Tyr506 is modified to Phosphotyrosine. The segment at 522-544 (ETSSDQGNEDEEEPKEVSSSTEL) is disordered. SH2 domains are found at residues 550 to 657 (WFHG…SEPV) and 668 to 756 (WYHA…RYPI). Tyr771 is subject to Phosphotyrosine; by SYK. At Tyr775 the chain carries Phosphotyrosine. Residue Tyr783 is modified to Phosphotyrosine; by ITK, SYK and TXK. Positions 791 to 851 (TFKCAVKALF…PSNYVEEMVN (61 aa)) constitute an SH3 domain. The 37-residue stretch at 895-931 (FVFSISMASVAHWSLDVAADSQEELQDWVKKIREVAQ) folds into the PH 2; second part domain. Residues 953–1070 (LSELVVYCRP…GYVLQPSTMR (118 aa)) enclose the PI-PLC Y-box domain. At Tyr977 the chain carries Phosphotyrosine. The C2 domain maps to 1071 to 1194 (DEAFDPFDKS…TGYRAVPLKN (124 aa)). Phosphoserine occurs at positions 1221, 1222, 1227, 1233, and 1248. Tyr1253 carries the phosphotyrosine modification. Position 1263 is a phosphoserine (Ser1263). The interval 1271–1290 (FDSRERRAPRRTRVNGDNRL) is disordered.

As to quaternary structure, interacts with AGAP2 via its SH3 domain. Interacts (via SH2 domain) with RET. Interacts with FLT1 (tyrosine-phosphorylated). Interacts (via SH2 domain) with FGFR1, FGFR2, FGFR3 and FGFR4 (phosphorylated). Interacts with LAT (phosphorylated) upon TCR activation. Interacts (via SH3 domain) with the Pro-rich domain of TNK1. Associates with BLNK, VAV1, GRB2 and NCK1 in a B-cell antigen receptor-dependent fashion. Interacts with CBLB in activated T-cells; which inhibits phosphorylation. Interacts with SHB. Interacts (via SH3 domain) with the Arg/Gly-rich-flanked Pro-rich domains of KHDRBS1/SAM68. This interaction is selectively regulated by arginine methylation of KHDRBS1/SAM68. Interacts with INPP5D/SHIP1, THEMIS and CLNK. Interacts with AXL, FLT4 and KIT. Interacts with RALGPS1. Interacts (via the SH2 domains) with VIL1 (phosphorylated at C-terminus tyrosine phosphorylation sites). Interacts (via SH2 domain) with PDGFRA and PDGFRB (tyrosine phosphorylated). Interacts with PIP5K1C. Interacts with NTRK1 and NTRK2 (phosphorylated upon ligand-binding). Interacts with SYK; activates PLCG1. Interacts with GRB2, LAT and THEMIS upon TCR activation in thymocytes. Interacts with TESPA1; the association is increased with prolonged stimulation of the TCR and may facilitate the assembly of the LAT signalosome. Interacts (via C-terminal proline-rich domain (PRD)) with PLCG1 (via SH3 domain); this interaction leads to guanine nucleotide exchange from PlCG1 to DNM1 and enhances DNM1-dependent endocytosis. In terms of assembly, (Microbial infection) Interacts (via SH3 domain) with HEV ORF3 protein. The cofactor is Ca(2+). Tyrosine phosphorylated in response to signaling via activated FLT3, KIT and PDGFRA. Tyrosine phosphorylated by activated FGFR1, FGFR2, FGFR3 and FGFR4. Tyrosine phosphorylated by activated FLT1 and KDR. Tyrosine phosphorylated by activated PDGFRB. The receptor-mediated activation of PLCG1 involves its phosphorylation by tyrosine kinases, in response to ligation of a variety of growth factor receptors and immune system receptors. For instance, SYK phosphorylates and activates PLCG1 in response to ligation of the B-cell receptor. May be dephosphorylated by PTPRJ. Phosphorylated by ITK and TXK on Tyr-783 upon TCR activation in T-cells. Post-translationally, ubiquitinated by CBLB in activated T-cells.

It localises to the cell projection. Its subcellular location is the lamellipodium. The protein resides in the ruffle. The catalysed reaction is a 1,2-diacyl-sn-glycero-3-phospho-(1D-myo-inositol-4,5-bisphosphate) + H2O = 1D-myo-inositol 1,4,5-trisphosphate + a 1,2-diacyl-sn-glycerol + H(+). The enzyme catalyses a 1,2-diacyl-sn-glycero-3-phospho-(1D-myo-inositol) + H2O = 1D-myo-inositol 1-phosphate + a 1,2-diacyl-sn-glycerol + H(+). With respect to regulation, activated by phosphorylation on tyrosine residues. In terms of biological role, mediates the production of the second messenger molecules diacylglycerol (DAG) and inositol 1,4,5-trisphosphate (IP3). Plays an important role in the regulation of intracellular signaling cascades. Becomes activated in response to ligand-mediated activation of receptor-type tyrosine kinases, such as PDGFRA, PDGFRB, EGFR, FGFR1, FGFR2, FGFR3 and FGFR4. Plays a role in actin reorganization and cell migration. Guanine nucleotide exchange factor that binds the GTPase DNM1 and catalyzes the dissociation of GDP, allowing a GTP molecule to bind in its place, therefore enhancing DNM1-dependent endocytosis. This chain is 1-phosphatidylinositol 4,5-bisphosphate phosphodiesterase gamma-1, found in Homo sapiens (Human).